We begin with the raw amino-acid sequence, 1772 residues long: Putative stereocilin-like protein (1772 aa).

An N-terminal signal peptide occupies residues 1-25; the sequence is MALSLWPLLLLLLLLLLLSFAVTLA. Residues Asn-65, Asn-427, Asn-476, and Asn-565 are each glycosylated (N-linked (GlcNAc...) asparagine).

The protein belongs to the stereocilin family.

Its subcellular location is the secreted. The sequence is that of Putative stereocilin-like protein (STRCP1) from Homo sapiens (Human).